The chain runs to 418 residues: Dihydrofolate synthase/folylpolyglutamate synthase (418 aa).

53-56 (GKGT) is a binding site for ATP. Serine 77 lines the Mg(2+) pocket. 116-119 (TYFE) contributes to the 7,8-dihydropteroate binding site. Glutamate 140 is a binding site for Mg(2+). 7,8-dihydropteroate is bound at residue 147 to 149 (LDA). Mg(2+) is bound at residue histidine 167. ATP contacts are provided by asparagine 252, arginine 284, and aspartate 297.

Belongs to the folylpolyglutamate synthase family. Monomer. Requires Mg(2+) as cofactor.

The catalysed reaction is 7,8-dihydropteroate + L-glutamate + ATP = 7,8-dihydrofolate + ADP + phosphate + H(+). It catalyses the reaction (6S)-5,6,7,8-tetrahydrofolyl-(gamma-L-Glu)(n) + L-glutamate + ATP = (6S)-5,6,7,8-tetrahydrofolyl-(gamma-L-Glu)(n+1) + ADP + phosphate + H(+). It carries out the reaction 10-formyltetrahydrofolyl-(gamma-L-Glu)(n) + L-glutamate + ATP = 10-formyltetrahydrofolyl-(gamma-L-Glu)(n+1) + ADP + phosphate + H(+). The enzyme catalyses (6R)-5,10-methylenetetrahydrofolyl-(gamma-L-Glu)(n) + L-glutamate + ATP = (6R)-5,10-methylenetetrahydrofolyl-(gamma-L-Glu)(n+1) + ADP + phosphate + H(+). It participates in cofactor biosynthesis; tetrahydrofolate biosynthesis; 7,8-dihydrofolate from 2-amino-4-hydroxy-6-hydroxymethyl-7,8-dihydropteridine diphosphate and 4-aminobenzoate: step 2/2. Its pathway is cofactor biosynthesis; tetrahydrofolylpolyglutamate biosynthesis. Functionally, functions in two distinct reactions of the de novo folate biosynthetic pathway. Catalyzes the addition of a glutamate residue to dihydropteroate (7,8-dihydropteroate or H2Pte) to form dihydrofolate (7,8-dihydrofolate monoglutamate or H2Pte-Glu). Also catalyzes successive additions of L-glutamate to tetrahydrofolate or 10-formyltetrahydrofolate or 5,10-methylenetetrahydrofolate, leading to folylpolyglutamate derivatives. The polypeptide is Dihydrofolate synthase/folylpolyglutamate synthase (folC) (Buchnera aphidicola subsp. Schizaphis graminum (strain Sg)).